The chain runs to 355 residues: MIDKLEAIEKKYEEVSKQIVDPSIMADMKQYASLNKTYKELSKIVDVYTVYKSNLANLESAKTLLSIEKDAAFRDLAKEEIDSLELQKTQLEEDLKFLLLPKDPNDSKNVILEIRAGTGGDEAGIFAGDLFRMYSRFAEKMQWKLSIIEEVESTSGGYKEIICSIAGEGAYGMLKYESGVHRVQRVPATETQGRIHTSAASVVVLPEMDEVEVDLDMNDIRKDTFCSSGPGGQSVNTTYSAIRLTHIPTGIVVSCQDEKSQIKNLEKALKVLRARLYEQELKKQQDAIGAERRSMVKSGDRSDKIRTYNFPQGRVTDHRIGYTIHNLPAVMDGAVGDLIEALQLADNAERLQQGA.

Glutamine 233 is modified (N5-methylglutamine).

This sequence belongs to the prokaryotic/mitochondrial release factor family. Post-translationally, methylated by PrmC. Methylation increases the termination efficiency of RF1.

The protein localises to the cytoplasm. In terms of biological role, peptide chain release factor 1 directs the termination of translation in response to the peptide chain termination codons UAG and UAA. The sequence is that of Peptide chain release factor 1 from Amoebophilus asiaticus (strain 5a2).